The primary structure comprises 209 residues: MIGLVGKKVGMTRIFTEDGVSIPVTVIEVEANRVTQVKDLANDGYRAVQVTTGAKKANRVTKPEAGHFAKAGVEAGRGLWEFRLAEGEEYTVGQSISVELFADVKKVDVTGTSKGKGFAGTVKRWNFRTQDATHGNSLSHRVPGSIGQNQTPGKVFKGKKMAGQLGNERVTVQSLDVVRVDAERNLLLVKGGVPGATGCDLIVKPAVKA.

Q150 carries the N5-methylglutamine modification.

It belongs to the universal ribosomal protein uL3 family. In terms of assembly, part of the 50S ribosomal subunit. Forms a cluster with proteins L14 and L19. Methylated by PrmB.

In terms of biological role, one of the primary rRNA binding proteins, it binds directly near the 3'-end of the 23S rRNA, where it nucleates assembly of the 50S subunit. This Citrobacter koseri (strain ATCC BAA-895 / CDC 4225-83 / SGSC4696) protein is Large ribosomal subunit protein uL3.